The chain runs to 330 residues: UPF0353 protein MAP_3434 (330 aa).

The next 2 helical transmembrane spans lie at 21 to 41 and 63 to 83; these read GMLL…VVQA and LPIA…ATPT. The VWFA domain occupies 94–289; the sequence is VIMLVIDMSQ…GELQKSYNAI (196 aa). Residues 304-324 traverse the membrane as a helical segment; that stretch reads AGWLRLGVLTALIATALALLI.

The protein belongs to the UPF0353 family.

The protein localises to the cell membrane. The sequence is that of UPF0353 protein MAP_3434 from Mycolicibacterium paratuberculosis (strain ATCC BAA-968 / K-10) (Mycobacterium paratuberculosis).